The following is a 231-amino-acid chain: Large ribosomal subunit protein uL1 (231 aa).

The protein belongs to the universal ribosomal protein uL1 family. In terms of assembly, part of the 50S ribosomal subunit.

Functionally, binds directly to 23S rRNA. The L1 stalk is quite mobile in the ribosome, and is involved in E site tRNA release. In terms of biological role, protein L1 is also a translational repressor protein, it controls the translation of the L11 operon by binding to its mRNA. This is Large ribosomal subunit protein uL1 from Ectopseudomonas mendocina (strain ymp) (Pseudomonas mendocina).